We begin with the raw amino-acid sequence, 94 residues long: Integration host factor subunit beta (94 aa).

Belongs to the bacterial histone-like protein family. In terms of assembly, heterodimer of an alpha and a beta chain.

Functionally, this protein is one of the two subunits of integration host factor, a specific DNA-binding protein that functions in genetic recombination as well as in transcriptional and translational control. The sequence is that of Integration host factor subunit beta from Nitrosospira multiformis (strain ATCC 25196 / NCIMB 11849 / C 71).